A 399-amino-acid chain; its full sequence is UDP-N-acetylglucosamine--N-acetylmuramyl-(pentapeptide) pyrophosphoryl-undecaprenol N-acetylglucosamine transferase (399 aa).

Residues methionine 1–phenylalanine 31 form a disordered region. Positions histidine 7–alanine 21 are enriched in basic residues. Residues threonine 58–glycine 60, asparagine 170, arginine 206, serine 234, isoleucine 288, and glutamine 333 each bind UDP-N-acetyl-alpha-D-glucosamine.

This sequence belongs to the glycosyltransferase 28 family. MurG subfamily.

Its subcellular location is the cell inner membrane. The catalysed reaction is di-trans,octa-cis-undecaprenyl diphospho-N-acetyl-alpha-D-muramoyl-L-alanyl-D-glutamyl-meso-2,6-diaminopimeloyl-D-alanyl-D-alanine + UDP-N-acetyl-alpha-D-glucosamine = di-trans,octa-cis-undecaprenyl diphospho-[N-acetyl-alpha-D-glucosaminyl-(1-&gt;4)]-N-acetyl-alpha-D-muramoyl-L-alanyl-D-glutamyl-meso-2,6-diaminopimeloyl-D-alanyl-D-alanine + UDP + H(+). It participates in cell wall biogenesis; peptidoglycan biosynthesis. Its function is as follows. Cell wall formation. Catalyzes the transfer of a GlcNAc subunit on undecaprenyl-pyrophosphoryl-MurNAc-pentapeptide (lipid intermediate I) to form undecaprenyl-pyrophosphoryl-MurNAc-(pentapeptide)GlcNAc (lipid intermediate II). The polypeptide is UDP-N-acetylglucosamine--N-acetylmuramyl-(pentapeptide) pyrophosphoryl-undecaprenol N-acetylglucosamine transferase (Acidovorax sp. (strain JS42)).